We begin with the raw amino-acid sequence, 356 residues long: A-type ATP synthase subunit C (356 aa).

The protein belongs to the V-ATPase V0D/AC39 subunit family. Has multiple subunits with at least A(3), B(3), C, D, E, F, H, I and proteolipid K(x).

Its subcellular location is the cell membrane. Component of the A-type ATP synthase that produces ATP from ADP in the presence of a proton gradient across the membrane. This Thermoplasma acidophilum (strain ATCC 25905 / DSM 1728 / JCM 9062 / NBRC 15155 / AMRC-C165) protein is A-type ATP synthase subunit C.